We begin with the raw amino-acid sequence, 227 residues long: Ribose-5-phosphate isomerase A (227 aa).

Substrate contacts are provided by residues 26–29, 82–85, and 95–98; these read TGST, DGAD, and KGGG. Catalysis depends on glutamate 104, which acts as the Proton acceptor. Lysine 122 is a substrate binding site.

It belongs to the ribose 5-phosphate isomerase family. In terms of assembly, homodimer.

The catalysed reaction is aldehydo-D-ribose 5-phosphate = D-ribulose 5-phosphate. It participates in carbohydrate degradation; pentose phosphate pathway; D-ribose 5-phosphate from D-ribulose 5-phosphate (non-oxidative stage): step 1/1. Functionally, catalyzes the reversible conversion of ribose-5-phosphate to ribulose 5-phosphate. This chain is Ribose-5-phosphate isomerase A, found in Streptococcus pneumoniae (strain ATCC 700669 / Spain 23F-1).